We begin with the raw amino-acid sequence, 101 residues long: ATP-dependent Clp protease adapter protein ClpS 2 (101 aa).

This sequence belongs to the ClpS family. As to quaternary structure, binds to the N-terminal domain of the chaperone ClpA.

Its function is as follows. Involved in the modulation of the specificity of the ClpAP-mediated ATP-dependent protein degradation. This is ATP-dependent Clp protease adapter protein ClpS 2 from Rhizobium meliloti (strain 1021) (Ensifer meliloti).